We begin with the raw amino-acid sequence, 361 residues long: RNA 3'-terminal phosphate cyclase (361 aa).

ATP-binding positions include Q109 and 293-297; that span reads HLADQ. H319 (tele-AMP-histidine intermediate) is an active-site residue.

It belongs to the RNA 3'-terminal cyclase family. Type 1 subfamily.

It is found in the cytoplasm. It catalyses the reaction a 3'-end 3'-phospho-ribonucleotide-RNA + ATP = a 3'-end 2',3'-cyclophospho-ribonucleotide-RNA + AMP + diphosphate. In terms of biological role, catalyzes the conversion of 3'-phosphate to a 2',3'-cyclic phosphodiester at the end of RNA. The mechanism of action of the enzyme occurs in 3 steps: (A) adenylation of the enzyme by ATP; (B) transfer of adenylate to an RNA-N3'P to produce RNA-N3'PP5'A; (C) and attack of the adjacent 2'-hydroxyl on the 3'-phosphorus in the diester linkage to produce the cyclic end product. The biological role of this enzyme is unknown but it is likely to function in some aspects of cellular RNA processing. The sequence is that of RNA 3'-terminal phosphate cyclase from Methylococcus capsulatus (strain ATCC 33009 / NCIMB 11132 / Bath).